Reading from the N-terminus, the 162-residue chain is Nucleotide-binding protein CMM_2802 (162 aa).

It belongs to the YajQ family.

In terms of biological role, nucleotide-binding protein. In Clavibacter michiganensis subsp. michiganensis (strain NCPPB 382), this protein is Nucleotide-binding protein CMM_2802.